The sequence spans 1053 residues: DNA-directed RNA polymerase subunit beta' (1053 aa).

The Zn(2+) site is built by Cys60, Cys62, Cys75, and Cys78. Residues Asp449, Asp451, and Asp453 each coordinate Mg(2+). Residues Cys818, Cys892, Cys899, and Cys902 each coordinate Zn(2+).

Belongs to the RNA polymerase beta' chain family. As to quaternary structure, the RNAP catalytic core consists of 2 alpha, 1 beta, 1 beta' and 1 omega subunit. When a sigma factor is associated with the core the holoenzyme is formed, which can initiate transcription. The cofactor is Mg(2+). It depends on Zn(2+) as a cofactor.

It carries out the reaction RNA(n) + a ribonucleoside 5'-triphosphate = RNA(n+1) + diphosphate. Functionally, DNA-dependent RNA polymerase catalyzes the transcription of DNA into RNA using the four ribonucleoside triphosphates as substrates. The polypeptide is DNA-directed RNA polymerase subunit beta' (Listeria grayi (Listeria murrayi)).